Reading from the N-terminus, the 21-residue chain is Misgurin (21 aa).

The segment at 1–21 is disordered; that stretch reads RQRVEELSKFSKKGAAARRRK. Residues 10–21 show a composition bias toward basic residues; it reads FSKKGAAARRRK.

The protein localises to the secreted. Functionally, strong antimicrobial activity against several Gram-positive and Gram-negative bacteria and fungi. The sequence is that of Misgurin from Misgurnus anguillicaudatus (Oriental weatherloach).